Consider the following 360-residue polypeptide: Peptide chain release factor 1 (360 aa).

Q235 carries the post-translational modification N5-methylglutamine. The interval 285–313 (KRQQAEASTRRNLLGSGDRSDRNRTYNFP) is disordered.

It belongs to the prokaryotic/mitochondrial release factor family. Methylated by PrmC. Methylation increases the termination efficiency of RF1.

The protein localises to the cytoplasm. Functionally, peptide chain release factor 1 directs the termination of translation in response to the peptide chain termination codons UAG and UAA. The chain is Peptide chain release factor 1 from Klebsiella pneumoniae (strain 342).